The sequence spans 318 residues: MGEKRNSCKNKKIVFMGTPEIATYALNALLEKSFDVVAVVCQPDKPIGRKKEIIFSSVKKLAIEKNIKFFQPNKIKEIENELKELNPFAFVTCAFGQFIPDSILSIPEFGCINIHASLLPKYRGGAPIHWAVINGEKETGVCLMRTIKQMDAGDVYCSRKVNIEESDTTSTLFKKMNNLVYDIVLNDLEKVFNLEYPPIKQDESKVSFAYNISKDDEKINFEKNAVEIVNLIRGLSETPGAYCFINDKKMKLFKAVSTNSKSNNAPGTINNISKEGILISTKDFDILVKEVQIEGKNRQEVKNILNGNSEIKIGVTLK.

Ser-117 to Pro-120 is a (6S)-5,6,7,8-tetrahydrofolate binding site.

This sequence belongs to the Fmt family.

It catalyses the reaction L-methionyl-tRNA(fMet) + (6R)-10-formyltetrahydrofolate = N-formyl-L-methionyl-tRNA(fMet) + (6S)-5,6,7,8-tetrahydrofolate + H(+). Attaches a formyl group to the free amino group of methionyl-tRNA(fMet). The formyl group appears to play a dual role in the initiator identity of N-formylmethionyl-tRNA by promoting its recognition by IF2 and preventing the misappropriation of this tRNA by the elongation apparatus. The chain is Methionyl-tRNA formyltransferase from Malacoplasma penetrans (strain HF-2) (Mycoplasma penetrans).